Here is a 129-residue protein sequence, read N- to C-terminus: Follitropin subunit beta (129 aa).

Positions 1 to 18 (MKSVQFCFLFCCWRATCC) are cleaved as a signal peptide. Cystine bridges form between Cys-21-Cys-69, Cys-35-Cys-84, Cys-38-Cys-122, Cys-46-Cys-100, Cys-50-Cys-102, and Cys-105-Cys-112. Asn-25 and Asn-42 each carry an N-linked (GlcNAc...) asparagine glycan.

The protein belongs to the glycoprotein hormones subunit beta family. In terms of assembly, heterodimer. The active follitropin is a heterodimer composed of an alpha chain/CGA shared with other hormones and a unique beta chain/FSHB shown here.

The protein localises to the secreted. Functionally, together with the alpha chain CGA constitutes follitropin, the follicle-stimulating hormone, and provides its biological specificity to the hormone heterodimer. Binds FSHR, a G protein-coupled receptor, on target cells to activate downstream signaling pathways. Follitropin is involved in follicle development and spermatogenesis in reproductive organs. The polypeptide is Follitropin subunit beta (FSHB) (Cervus nippon (Sika deer)).